The following is a 284-amino-acid chain: Dihydropteroate synthase (284 aa).

Residues 6–265 enclose the Pterin-binding domain; the sequence is VQVIGVLNVT…DVRASVDALK (260 aa). Asn13 contributes to the Mg(2+) binding site. Residues Thr53, Asp86, Asn105, Asp177, Lys213, and 253-255 each bind (7,8-dihydropterin-6-yl)methyl diphosphate; that span reads RVH.

The protein belongs to the DHPS family. Homodimer. Requires Mg(2+) as cofactor.

The catalysed reaction is (7,8-dihydropterin-6-yl)methyl diphosphate + 4-aminobenzoate = 7,8-dihydropteroate + diphosphate. It participates in cofactor biosynthesis; tetrahydrofolate biosynthesis; 7,8-dihydrofolate from 2-amino-4-hydroxy-6-hydroxymethyl-7,8-dihydropteridine diphosphate and 4-aminobenzoate: step 1/2. Its activity is regulated as follows. Is potently inhibited by the sulfone dapsone and the two sulfonamides sulfamethoxazole and sulfamethoxypyridazine, with Kis in the range of 12 to 32 nM. To a lesser extent, is also inhibited by p-aminosalicylate (PAS). Functionally, catalyzes the condensation of para-aminobenzoate (pABA) with 6-hydroxymethyl-7,8-dihydropterin diphosphate (DHPt-PP) to form 7,8-dihydropteroate, the immediate precursor of folate derivatives. The protein is Dihydropteroate synthase (folP1) of Mycobacterium leprae (strain TN).